The primary structure comprises 315 residues: Prephenate dehydratase (315 aa).

The Prephenate dehydratase domain maps to 3-189; the sequence is RIAYLGPEGT…ARTRFVLVGP (187 aa). An ACT domain is found at 203–280; sequence SVVLRIDNAP…ADVRYLGSWP (78 aa).

Homodimer.

The enzyme catalyses prephenate + H(+) = 3-phenylpyruvate + CO2 + H2O. It functions in the pathway amino-acid biosynthesis; L-phenylalanine biosynthesis; phenylpyruvate from prephenate: step 1/1. The chain is Prephenate dehydratase (pheA) from Mycobacterium avium (strain 104).